The sequence spans 1309 residues: Putative receptor-type tyrosine-protein phosphatase mosPTP-1 (1309 aa).

A signal peptide spans 1–36 (MNSAPRNAGAARSVDRRGFIAACGLLVLLVVRMLGA). The Extracellular portion of the chain corresponds to 37–572 (ADATRIFDIE…RQVYDDYNLA (536 aa)). N-linked (GlcNAc...) asparagine glycans are attached at residues Asn-60, Asn-107, Asn-162, Asn-257, Asn-353, Asn-389, Asn-455, Asn-501, and Asn-513. 4 Fibronectin type-III domains span residues 147 to 244 (PPGR…TLRE), 249 to 347 (KPVT…DEGV), 350 to 449 (KPLN…SGPS), and 450 to 553 (APKV…LQLH). The chain crosses the membrane as a helical span at residues 573–593 (VLGGIVFSCFGLLLIVLSFLL). Over 594-1309 (WKKCFHAAYY…NHLNLDHNQS (716 aa)) the chain is Cytoplasmic. Tyrosine-protein phosphatase domains lie at 656 to 921 (FSKE…LVEA) and 944 to 1196 (IDNQ…LSYM). Residue Cys-862 is the Phosphocysteine intermediate of the active site. Residues 1239–1269 (NSGDGGGNGNDGVPTGNGTNGGLPMSGGGTT) form a disordered region. Positions 1256 to 1268 (GTNGGLPMSGGGT) are enriched in gly residues.

The protein belongs to the protein-tyrosine phosphatase family. Receptor class subfamily. Interacts with C-type lectin mosGCTL-1; the interaction probably mediates the recruitment of West Nile virus particles in complex with C-type lectin mosGCTL-1 to the cell surface. Interacts with C-type lectin mosGCTL-7; the interaction probably mediates the recruitment of Japanese encephalitis virus particles in complex with C-type lectin mosGCTL-7 to the cell surface. In terms of tissue distribution, salivary gland (at protein level). Hemolymph. Low-level expression in midgut.

Its subcellular location is the cell membrane. The enzyme catalyses O-phospho-L-tyrosyl-[protein] + H2O = L-tyrosyl-[protein] + phosphate. In terms of biological role, putative protein tyrosine-protein phosphatase. Its function is as follows. (Microbial infection) Facilitates West Nile virus infection in mosquitoes probably via recruiting West Nile virus particles in complex with C-type lectin mosGCTL-1 to the cell surface. Functionally, (Microbial infection) Facilitates Japanese encephalitis virus infection in mosquitoes probably via recruiting Japanese encephalitis virus particles in complex with C-type lectin mosGCTL-7 to the cell surface. In Aedes aegypti (Yellowfever mosquito), this protein is Putative receptor-type tyrosine-protein phosphatase mosPTP-1.